Reading from the N-terminus, the 266-residue chain is 26 kDa endochitinase 2 (266 aa).

Residues 1-23 form the signal peptide; the sequence is MRSLAVVVAVVATVAMAIGTARG. Cystine bridges form between C46/C108, C120/C128, and C227/C259. The Proton donor role is filled by E90.

This sequence belongs to the glycosyl hydrolase 19 family. Chitinase class II subfamily.

It catalyses the reaction Random endo-hydrolysis of N-acetyl-beta-D-glucosaminide (1-&gt;4)-beta-linkages in chitin and chitodextrins.. Its function is as follows. Defense against chitin-containing fungal pathogens. This chain is 26 kDa endochitinase 2, found in Hordeum vulgare (Barley).